A 965-amino-acid chain; its full sequence is UvrABC system protein A (965 aa).

An ATP-binding site is contributed by 32 to 39 (GLSGSGKS). The C4-type zinc-finger motif lies at 254–281 (CPVCDYSLPELEPRLFSFNAPMGACPAC). 2 consecutive ABC transporter domains span residues 311-588 (WDRR…PRSL) and 608-937 (PNAT…HFLA). 641-648 (GVSGSGKS) is a binding site for ATP. A C4-type zinc finger spans residues 740 to 766 (CEACEGDGLIKVEMHFLPDVYVPCDVC).

Belongs to the ABC transporter superfamily. UvrA family. In terms of assembly, forms a heterotetramer with UvrB during the search for lesions.

The protein resides in the cytoplasm. In terms of biological role, the UvrABC repair system catalyzes the recognition and processing of DNA lesions. UvrA is an ATPase and a DNA-binding protein. A damage recognition complex composed of 2 UvrA and 2 UvrB subunits scans DNA for abnormalities. When the presence of a lesion has been verified by UvrB, the UvrA molecules dissociate. This is UvrABC system protein A from Xylella fastidiosa (strain 9a5c).